A 150-amino-acid polypeptide reads, in one-letter code: Large ribosomal subunit protein bL9 (150 aa).

The protein belongs to the bacterial ribosomal protein bL9 family.

Its function is as follows. Binds to the 23S rRNA. The sequence is that of Large ribosomal subunit protein bL9 from Acidovorax ebreus (strain TPSY) (Diaphorobacter sp. (strain TPSY)).